The sequence spans 309 residues: Homoserine kinase (309 aa).

88–98 contributes to the ATP binding site; sequence PLARGLGSSAA.

It belongs to the GHMP kinase family. Homoserine kinase subfamily.

It localises to the cytoplasm. It catalyses the reaction L-homoserine + ATP = O-phospho-L-homoserine + ADP + H(+). Its pathway is amino-acid biosynthesis; L-threonine biosynthesis; L-threonine from L-aspartate: step 4/5. In terms of biological role, catalyzes the ATP-dependent phosphorylation of L-homoserine to L-homoserine phosphate. This chain is Homoserine kinase, found in Halalkalibacterium halodurans (strain ATCC BAA-125 / DSM 18197 / FERM 7344 / JCM 9153 / C-125) (Bacillus halodurans).